The following is a 77-amino-acid chain: uncharacterized protein (77 aa).

To E.coli YdfK.

This is an uncharacterized protein from Escherichia coli (strain K12).